A 62-amino-acid polypeptide reads, in one-letter code: Light-harvesting protein B-870 alpha chain (62 aa).

M1 bears the N-formylmethionine mark. The Cytoplasmic portion of the chain corresponds to 1–12 (MWRIWQLFDPRQ). A helical transmembrane segment spans residues 13 to 33 (ALVGLATFLFVLALLIHFILL). H29 contacts a bacteriochlorophyll. Topologically, residues 34–52 (STERFNWLEGASTKPVQTS) are periplasmic. A propeptide spanning residues 53-62 (MVMPSSDLAV) is cleaved from the precursor.

Belongs to the antenna complex alpha subunit family. In terms of assembly, the core complex is formed by different alpha and beta chains, binding bacteriochlorophyll molecules, and arranged most probably in tetrameric structures disposed around the reaction center. The non-pigmented gamma chains may constitute additional components.

It is found in the cell inner membrane. Antenna complexes are light-harvesting systems, which transfer the excitation energy to the reaction centers. The sequence is that of Light-harvesting protein B-870 alpha chain from Rhodospirillum rubrum.